Here is a 1254-residue protein sequence, read N- to C-terminus: DNA-directed RNA polymerase subunit beta' (1254 aa).

The Zn(2+) site is built by Cys59, Cys61, Cys76, and Cys79. Mg(2+) is bound by residues Asp501, Asp503, and Asp505. Cys871, Cys946, Cys953, and Cys956 together coordinate Zn(2+).

The protein belongs to the RNA polymerase beta' chain family. As to quaternary structure, the RNAP catalytic core consists of 2 alpha, 1 beta, 1 beta' and 1 omega subunit. When a sigma factor is associated with the core the holoenzyme is formed, which can initiate transcription. Mg(2+) is required as a cofactor. The cofactor is Zn(2+).

The enzyme catalyses RNA(n) + a ribonucleoside 5'-triphosphate = RNA(n+1) + diphosphate. Functionally, DNA-dependent RNA polymerase catalyzes the transcription of DNA into RNA using the four ribonucleoside triphosphates as substrates. The polypeptide is DNA-directed RNA polymerase subunit beta' (Mesoplasma florum (strain ATCC 33453 / NBRC 100688 / NCTC 11704 / L1) (Acholeplasma florum)).